The primary structure comprises 144 residues: Transcription antitermination protein NusB (144 aa).

The protein belongs to the NusB family.

Its function is as follows. Involved in transcription antitermination. Required for transcription of ribosomal RNA (rRNA) genes. Binds specifically to the boxA antiterminator sequence of the ribosomal RNA (rrn) operons. The polypeptide is Transcription antitermination protein NusB (Dictyoglomus turgidum (strain DSM 6724 / Z-1310)).